Reading from the N-terminus, the 209-residue chain is Thymidylate kinase (209 aa).

10–17 contributes to the ATP binding site; that stretch reads GIDGCGKT.

Belongs to the thymidylate kinase family.

The catalysed reaction is dTMP + ATP = dTDP + ADP. Functionally, phosphorylation of dTMP to form dTDP in both de novo and salvage pathways of dTTP synthesis. The sequence is that of Thymidylate kinase from Synechococcus sp. (strain CC9605).